Here is a 207-residue protein sequence, read N- to C-terminus: MSDRILVLVRHGQSEWNLKNLFTGWRDPDLTEQGVSEAKRAGALLKAEGLKFDVAFTSDLTRAQKTLGLILGEMGQEGVPTTRNVALNERDYGDLAGLNKDDARAKWGDDQVHIWRRSYDIAPPGGESLRDTVARTLPYYVQEILPCVLRGQTTLVAAHGNSLRALIMTLEKLSPEGIMKRELNTGAPIVYKLAADSTVAEKRDLVA.

Substrate-binding positions include 10-17 (RHGQSEWN), 23-24 (TG), Arg-62, 89-92 (ERDY), Lys-100, 116-117 (RR), and 160-161 (GN). The active-site Tele-phosphohistidine intermediate is the His-11. The active-site Proton donor/acceptor is the Glu-89.

Belongs to the phosphoglycerate mutase family. BPG-dependent PGAM subfamily. Homodimer.

The enzyme catalyses (2R)-2-phosphoglycerate = (2R)-3-phosphoglycerate. The protein operates within carbohydrate degradation; glycolysis; pyruvate from D-glyceraldehyde 3-phosphate: step 3/5. Functionally, catalyzes the interconversion of 2-phosphoglycerate and 3-phosphoglycerate. The sequence is that of 2,3-bisphosphoglycerate-dependent phosphoglycerate mutase from Xanthobacter autotrophicus (strain ATCC BAA-1158 / Py2).